A 161-amino-acid chain; its full sequence is DNA-directed RNA polymerase III subunit RPC9 (161 aa).

A disordered region spans residues 75 to 96 (QEDEGEERESSGAKDAEKSGIS). A compositionally biased stretch (basic and acidic residues) spans 82-96 (RESSGAKDAEKSGIS).

The protein belongs to the eukaryotic RPC9 RNA polymerase subunit family. Component of the RNA polymerase III (Pol III) complex consisting of 17 subunits. Forms a Pol III subcomplex with RPC25/RPC8. Interacts with BURF1/TDS4.

Its subcellular location is the nucleus. Its function is as follows. DNA-dependent RNA polymerase catalyzes the transcription of DNA into RNA using the four ribonucleoside triphosphates as substrates. Specific peripheric component of RNA polymerase III which synthesizes small RNAs, such as 5S rRNA and tRNAs. The RPC25/RPC8-RPC17/RPC9 subcomplex may bind Pol III transcripts emerging from the adjacent exit pore during elongation. In Saccharomyces cerevisiae (strain ATCC 204508 / S288c) (Baker's yeast), this protein is DNA-directed RNA polymerase III subunit RPC9 (RPC17).